A 132-amino-acid polypeptide reads, in one-letter code: Large ribosomal subunit protein bL12 (132 aa).

This sequence belongs to the bacterial ribosomal protein bL12 family. As to quaternary structure, homodimer. Part of the ribosomal stalk of the 50S ribosomal subunit. Forms a multimeric L10(L12)X complex, where L10 forms an elongated spine to which 2 to 4 L12 dimers bind in a sequential fashion. Binds GTP-bound translation factors.

Its function is as follows. Forms part of the ribosomal stalk which helps the ribosome interact with GTP-bound translation factors. Is thus essential for accurate translation. In Chloroflexus aggregans (strain MD-66 / DSM 9485), this protein is Large ribosomal subunit protein bL12.